A 587-amino-acid chain; its full sequence is Ankyrin repeat and SOCS box protein 14 (587 aa).

11 ANK repeats span residues 81 to 110, 116 to 145, 149 to 178, 182 to 211, 215 to 244, 248 to 277, 281 to 310, 313 to 342, 355 to 384, 385 to 414, and 416 to 449; these read NGWLPLHKAAVQLNKNILEITMNASEPSTW, NGETALFLAVSSSLLENAHFLLLKGCNPNA, EGNSPLLTAVLKDAYDMATLLISHGADVNL, NERTALHEAAKLGRLDMVKLMLASGAYPDA, YGFTPLALAAQGGHTGIMQLLLQKGADVHS, DSSSVLLEAVRGGNPEAVSLLLEYGADANI, SGHLPIHVAADKGHFLALKVLVPVTDIAAI, SGISPVHCAAAGAHPHCLELLIQAGFDVNF, QRKSALYFAVSNGDLPSVKLLLSAGALPNQ, DPVNCLQIALRMGNYELISLLLRHGANVNY, and CRVNPLHFPSALQYTLKDEVMLRMLLNYGYDTER. One can recognise an SOCS box domain in the interval 521 to 576; that stretch reads WPEIHFILANPRSLQHLCRLKIRKCMGRLRLRCPVFMSFLPLPNLLKAYVLYKEYD.

Belongs to the ankyrin SOCS box (ASB) family. In terms of assembly, interacts with MAPRE2; this interaction promotes MAPRE2 degradation.

Its pathway is protein modification; protein ubiquitination. Its function is as follows. May be a substrate-recognition component of a SCF-like ECS (Elongin-Cullin-SOCS-box protein) E3 ubiquitin-protein ligase complex which mediates the ubiquitination and subsequent proteasomal degradation of target proteins. Plays a role in the inhibition of cardiomyocyte nuclear proliferation by mediating the ubiquitination and degradation of MAPRE2. The protein is Ankyrin repeat and SOCS box protein 14 (Asb14) of Mus musculus (Mouse).